We begin with the raw amino-acid sequence, 310 residues long: 1-aminocyclopropane-1-carboxylate oxidase 1 (310 aa).

Residues 113 to 133 are a coiled coil; that stretch reads EELSKTMDEYVCQLHKFAERL. The Fe2OG dioxygenase domain occupies 158-259; it reads PAFGTKVAKY…RLSIATFYNP (102 aa). Fe cation is bound by residues His182, Asp184, and His240. Arg250 serves as a coordination point for 2-oxoglutarate.

This sequence belongs to the iron/ascorbate-dependent oxidoreductase family. Fe(2+) is required as a cofactor.

It carries out the reaction 1-aminocyclopropane-1-carboxylate + L-ascorbate + O2 = ethene + L-dehydroascorbate + hydrogen cyanide + CO2 + 2 H2O. It participates in alkene biosynthesis; ethylene biosynthesis via S-adenosyl-L-methionine; ethylene from S-adenosyl-L-methionine: step 2/2. Functionally, enzyme involved in the ethylene biosynthesis. May promote stem elongation by maximizing the extensibility cells, possibly by activating ethylene biosynthesis, in response to very-long-chain fatty acids (VLCFAs C20:0 to C30:0). This is 1-aminocyclopropane-1-carboxylate oxidase 1 (ACO1) from Arabidopsis thaliana (Mouse-ear cress).